A 44-amino-acid chain; its full sequence is Photosystem I reaction center subunit IX (44 aa).

Residues 7 to 27 form a helical membrane-spanning segment; that stretch reads YLSTAPVLATLWFSSLAGLLI.

Belongs to the PsaJ family.

Its subcellular location is the plastid. It is found in the chloroplast thylakoid membrane. In terms of biological role, may help in the organization of the PsaE and PsaF subunits. The chain is Photosystem I reaction center subunit IX from Welwitschia mirabilis (Tree tumbo).